Reading from the N-terminus, the 570-residue chain is Sulfite reductase [NADPH] hemoprotein beta-component (570 aa).

4 residues coordinate [4Fe-4S] cluster: C434, C440, C479, and C483. A siroheme-binding site is contributed by C483.

This sequence belongs to the nitrite and sulfite reductase 4Fe-4S domain family. In terms of assembly, alpha(8)-beta(8). The alpha component is a flavoprotein, the beta component is a hemoprotein. Requires siroheme as cofactor. [4Fe-4S] cluster serves as cofactor.

It carries out the reaction hydrogen sulfide + 3 NADP(+) + 3 H2O = sulfite + 3 NADPH + 4 H(+). Its pathway is sulfur metabolism; hydrogen sulfide biosynthesis; hydrogen sulfide from sulfite (NADPH route): step 1/1. Functionally, component of the sulfite reductase complex that catalyzes the 6-electron reduction of sulfite to sulfide. This is one of several activities required for the biosynthesis of L-cysteine from sulfate. The chain is Sulfite reductase [NADPH] hemoprotein beta-component from Escherichia coli (strain SMS-3-5 / SECEC).